A 167-amino-acid polypeptide reads, in one-letter code: Signal peptidase complex catalytic subunit SEC11 (167 aa).

At 1–6 (MNIRQQ) the chain is on the cytoplasmic side. Residues 7–24 (LTKFLGLFLTLASAFMFW) form a helical; Signal-anchor for type II membrane protein membrane-spanning segment. Residues 25 to 167 (KGLSVVTNSH…LALSSLLGSE (143 aa)) lie on the Lumenal side of the membrane. Residues Ser44, His83, and Asp109 each act as charge relay system in the active site. The segment at 153 to 164 (ALMGMLALSSLL) is C-terminal short (CTS) helix.

Belongs to the peptidase S26B family. Component of the signal peptidase complex (SPC) composed of a catalytic subunit SEC11 and three accessory subunits SPC1, SPC2 and SPC3. The complex induces a local thinning of the ER membrane which is used to measure the length of the signal peptide (SP) h-region of protein substrates. This ensures the selectivity of the complex towards h-regions shorter than 18-20 amino acids. SPC associates with the translocon complex.

Its subcellular location is the endoplasmic reticulum membrane. The catalysed reaction is Cleavage of hydrophobic, N-terminal signal or leader sequences from secreted and periplasmic proteins.. Catalytic component of the signal peptidase complex (SPC) which catalyzes the cleavage of N-terminal signal sequences from nascent proteins as they are translocated into the lumen of the endoplasmic reticulum. Specifically cleaves N-terminal signal peptides that contain a hydrophobic alpha-helix (h-region) shorter than 18-20 amino acids. The chain is Signal peptidase complex catalytic subunit SEC11 (SEC11) from Eremothecium gossypii (strain ATCC 10895 / CBS 109.51 / FGSC 9923 / NRRL Y-1056) (Yeast).